The following is a 359-amino-acid chain: uncharacterized protein (359 aa).

Low complexity predominate over residues 73 to 88 (AATAGTTPATGASGSA). The tract at residues 73-93 (AATAGTTPATGASGSARPTDA) is disordered. The Macro domain maps to 179–354 (PSTCRGDNVS…AFSAAIQAGE (176 aa)).

This is an uncharacterized protein from Mycobacterium tuberculosis (strain ATCC 25618 / H37Rv).